We begin with the raw amino-acid sequence, 125 residues long: Putative glutaredoxin-C2 (125 aa).

In terms of domain architecture, Glutaredoxin spans 2 to 103; sequence AERVARLSSQ…PLLREAGALW (102 aa). C22 and C25 are oxidised to a cystine.

This sequence belongs to the glutaredoxin family. CC-type subfamily.

The protein localises to the cytoplasm. Has a glutathione-disulfide oxidoreductase activity in the presence of NADPH and glutathione reductase. Reduces low molecular weight disulfides and proteins. The protein is Putative glutaredoxin-C2 (GRXC2) of Oryza sativa subsp. japonica (Rice).